A 113-amino-acid chain; its full sequence is MRAEYKNMKSSVQKVNLVADMIRGKGVDVARSQLLFLKKALAKPLSKVLMSSVANAQNNFGVDPDNLYVKEVFVGKGMSLKRFAARARGRSASIRKHYSNVSILLGVLDGSKG.

The protein belongs to the universal ribosomal protein uL22 family. As to quaternary structure, part of the 50S ribosomal subunit.

In terms of biological role, this protein binds specifically to 23S rRNA; its binding is stimulated by other ribosomal proteins, e.g. L4, L17, and L20. It is important during the early stages of 50S assembly. It makes multiple contacts with different domains of the 23S rRNA in the assembled 50S subunit and ribosome. The globular domain of the protein is located near the polypeptide exit tunnel on the outside of the subunit, while an extended beta-hairpin is found that lines the wall of the exit tunnel in the center of the 70S ribosome. This chain is Large ribosomal subunit protein uL22, found in Neorickettsia sennetsu (strain ATCC VR-367 / Miyayama) (Ehrlichia sennetsu).